Here is a 219-residue protein sequence, read N- to C-terminus: Thymidylate kinase (219 aa).

Position 9 to 16 (9 to 16 (GIEGCGKT)) interacts with ATP.

It belongs to the thymidylate kinase family.

The catalysed reaction is dTMP + ATP = dTDP + ADP. Phosphorylation of dTMP to form dTDP in both de novo and salvage pathways of dTTP synthesis. The sequence is that of Thymidylate kinase from Syntrophus aciditrophicus (strain SB).